A 336-amino-acid polypeptide reads, in one-letter code: Dihydroorotate dehydrogenase (quinone) (336 aa).

FMN is bound by residues 62-66 (AGLDK) and Thr-86. Residue Lys-66 coordinates substrate. 111-115 (NRMGF) is a binding site for substrate. FMN is bound by residues Asn-139 and Asn-172. A substrate-binding site is contributed by Asn-172. Ser-175 acts as the Nucleophile in catalysis. Asn-177 contacts substrate. The FMN site is built by Lys-217 and Thr-245. 246-247 (NT) provides a ligand contact to substrate. FMN-binding positions include Gly-268, Gly-297, and 318–319 (YS).

This sequence belongs to the dihydroorotate dehydrogenase family. Type 2 subfamily. As to quaternary structure, monomer. Requires FMN as cofactor.

Its subcellular location is the cell membrane. It catalyses the reaction (S)-dihydroorotate + a quinone = orotate + a quinol. The protein operates within pyrimidine metabolism; UMP biosynthesis via de novo pathway; orotate from (S)-dihydroorotate (quinone route): step 1/1. Catalyzes the conversion of dihydroorotate to orotate with quinone as electron acceptor. The sequence is that of Dihydroorotate dehydrogenase (quinone) from Sodalis glossinidius (strain morsitans).